We begin with the raw amino-acid sequence, 328 residues long: Probable cell division protein WhiA (328 aa).

The H-T-H motif DNA-binding region spans 275–308 (SLEELGQLASPPMTKDAVAGRIRRLLSMADKRAE).

It belongs to the WhiA family.

Functionally, involved in cell division and chromosome segregation. The polypeptide is Probable cell division protein WhiA (Corynebacterium urealyticum (strain ATCC 43042 / DSM 7109)).